Consider the following 381-residue polypeptide: Endolytic peptidoglycan transglycosylase RlpA (381 aa).

A signal peptide spans 1-19 (MRKQLPVICVAAGIVLLAA). The N-palmitoyl cysteine moiety is linked to residue Cys-20. A lipid anchor (S-diacylglycerol cysteine) is attached at Cys-20. The tract at residues 196-274 (LPPRPDLSGG…QPAPVSAPVA (79 aa)) is disordered. A compositionally biased stretch (low complexity) spans 208-218 (SASSAPAQPQG). Residues 304–380 (AAASGRFVVQ…AQLQSFIASA (77 aa)) enclose the SPOR domain.

Belongs to the RlpA family.

The protein resides in the cell membrane. Its function is as follows. Lytic transglycosylase with a strong preference for naked glycan strands that lack stem peptides. The protein is Endolytic peptidoglycan transglycosylase RlpA of Salmonella typhimurium (strain LT2 / SGSC1412 / ATCC 700720).